The chain runs to 266 residues: Pyridoxal phosphate phosphatase YigL (266 aa).

Residue Asp8 is the Nucleophile of the active site. Asp8 contacts Mg(2+). A phosphate-binding site is contributed by Leu9. Asp10 is a Mg(2+) binding site. Phosphate contacts are provided by residues 42 to 43 and Lys191; that span reads TG. Asp214 is a Mg(2+) binding site. A phosphate-binding site is contributed by Asn217.

The protein belongs to the HAD-like hydrolase superfamily. Cof family. Mg(2+) is required as a cofactor. Mn(2+) serves as cofactor. Requires Co(2+) as cofactor. The cofactor is Zn(2+).

The catalysed reaction is pyridoxal 5'-phosphate + H2O = pyridoxal + phosphate. The enzyme catalyses sugar phosphate + H2O = sugar + phosphate.. Functionally, catalyzes the dephosphorylation of pyridoxal-phosphate (PLP) and sugar phosphate. This is Pyridoxal phosphate phosphatase YigL (yigL) from Escherichia coli O157:H7.